The sequence spans 340 residues: Glutamyl-tRNA reductase (340 aa).

Substrate is bound by residues 49-52 (TCNR), S108, 113-115 (ETE), and Q119. Catalysis depends on C50, which acts as the Nucleophile. Position 188 to 193 (188 to 193 (GAGEMS)) interacts with NADP(+).

Belongs to the glutamyl-tRNA reductase family. Homodimer.

It carries out the reaction (S)-4-amino-5-oxopentanoate + tRNA(Glu) + NADP(+) = L-glutamyl-tRNA(Glu) + NADPH + H(+). It participates in porphyrin-containing compound metabolism; protoporphyrin-IX biosynthesis; 5-aminolevulinate from L-glutamyl-tRNA(Glu): step 1/2. In terms of biological role, catalyzes the NADPH-dependent reduction of glutamyl-tRNA(Glu) to glutamate 1-semialdehyde (GSA). The polypeptide is Glutamyl-tRNA reductase (Akkermansia muciniphila (strain ATCC BAA-835 / DSM 22959 / JCM 33894 / BCRC 81048 / CCUG 64013 / CIP 107961 / Muc)).